We begin with the raw amino-acid sequence, 418 residues long: Putative ion-transport protein YfeO (418 aa).

Helical transmembrane passes span 10 to 30 (LLLS…LIVV), 54 to 74 (DSPL…GLVI), 99 to 119 (ALPG…SLGP), 120 to 140 (EHPI…RLLP), 149 to 169 (ILAS…AALI), 186 to 206 (LFAP…FFHP), 223 to 243 (ILSG…AVWC), 258 to 278 (VLVL…GGPV), 300 to 320 (DYFL…ASGF), 322 to 342 (GGRI…LHEH), 343 to 363 (VPAV…VLVV), and 371 to 391 (LFMA…CIVM).

Belongs to the chloride channel (TC 2.A.49) family.

It is found in the cell membrane. The sequence is that of Putative ion-transport protein YfeO from Shigella boydii serotype 4 (strain Sb227).